Here is a 151-residue protein sequence, read N- to C-terminus: UPF0208 membrane protein YfbV (151 aa).

Topologically, residues 1–45 (MSTPDNRSVNFFSLFRRGQHYAKTWPMEKRLAPVFVENRVIRMTR) are cytoplasmic. The chain crosses the membrane as a helical span at residues 46-65 (YAIRFMPPVAVFTLCWQIAL). Residues 66-68 (GGQ) lie on the Periplasmic side of the membrane. The helical transmembrane segment at 69–91 (LGPAVATALFALSLPMQGLWWLG) threads the bilayer. Residues 92-151 (KRSLTPLPPSILNWFYEVRGKLQEAGQALAPVEGKPDYQALADTLKRAFKQLDKTFLDDL) lie on the Cytoplasmic side of the membrane.

It belongs to the UPF0208 family.

The protein resides in the cell inner membrane. The polypeptide is UPF0208 membrane protein YfbV (yfbV) (Salmonella typhi).